The following is a 99-amino-acid chain: Malonate decarboxylase acyl carrier protein (99 aa).

Position 25 is an O-(phosphoribosyl dephospho-coenzyme A)serine (Ser-25).

It belongs to the MdcC family. Covalently binds the prosthetic group of malonate decarboxylase.

It localises to the cytoplasm. Functionally, subunit of malonate decarboxylase, it is an acyl carrier protein to which acetyl and malonyl thioester residues are bound via a 2'-(5''-phosphoribosyl)-3'-dephospho-CoA prosthetic group and turn over during the catalytic mechanism. In Pseudomonas aeruginosa (strain UCBPP-PA14), this protein is Malonate decarboxylase acyl carrier protein.